The sequence spans 396 residues: NADH-quinone oxidoreductase subunit D (396 aa).

The protein belongs to the complex I 49 kDa subunit family. As to quaternary structure, NDH-1 is composed of 14 different subunits. Subunits NuoB, C, D, E, F, and G constitute the peripheral sector of the complex.

It is found in the cell inner membrane. The catalysed reaction is a quinone + NADH + 5 H(+)(in) = a quinol + NAD(+) + 4 H(+)(out). In terms of biological role, NDH-1 shuttles electrons from NADH, via FMN and iron-sulfur (Fe-S) centers, to quinones in the respiratory chain. The immediate electron acceptor for the enzyme in this species is believed to be ubiquinone. Couples the redox reaction to proton translocation (for every two electrons transferred, four hydrogen ions are translocated across the cytoplasmic membrane), and thus conserves the redox energy in a proton gradient. The protein is NADH-quinone oxidoreductase subunit D of Mesorhizobium japonicum (strain LMG 29417 / CECT 9101 / MAFF 303099) (Mesorhizobium loti (strain MAFF 303099)).